Reading from the N-terminus, the 421-residue chain is Protein HOMOLOG OF MAMMALIAN LYST-INTERACTING PROTEIN 5 (421 aa).

Serine 2 is modified (N-acetylserine). The disordered stretch occupies residues 146–374 (IKEGRKPTPG…KYHYDSSYQP (229 aa)). A compositionally biased stretch (polar residues) spans 165–185 (SIPSSGPSGSYDHSASDTNTT). Over residues 188–207 (HRTELDPPHDSNDDSSHHQF) the composition is skewed to basic and acidic residues. Pro residues predominate over residues 245 to 258 (LPPPTGPSDSPYPH). Positions 278–293 (NYSSHEPSPNSLPNFQ) are enriched in polar residues. 2 stretches are compositionally biased toward low complexity: residues 294–308 (SYPS…STSP) and 317–337 (PEPY…SFSS).

This sequence belongs to the VTA1 family. In terms of assembly, homodimer. Interacts with SKD1/VPS4, VPS60-1, CHMP1A and CHMP1B. Binds to PROS/At4g24370. Interacts with MPK6 and MPK3. Post-translationally, phosphorylated by activated MPK6 and MPK3, this activation is required to trigger multivesicular bodies (MVBs) trafficking upon plant infection.

Its subcellular location is the cytoplasm. The protein localises to the endosome membrane. It is found in the nucleus. It localises to the endosome. The protein resides in the multivesicular body. Functionally, involved in the endosomal multivesicular bodies (MVB) pathway. MVBs contain intraluminal vesicles (ILVs) that are generated by invagination and scission from the limiting membrane of the endosome and are delivered to lysosomes enabling degradation of membrane proteins. Thought to be a cofactor of SKD1/VPS4, which catalyzes the disassembly of membrane-associated ESCRT-III. Target of pathogen-responsive mitogen-activated protein kinases (MPKs) that plays a critical role in plant basal resistance to Pseudomonas syringae in a SKD1-dependent manner by promoting multivesicular bodies (MVBs) trafficking upon plant infection. The protein is Protein HOMOLOG OF MAMMALIAN LYST-INTERACTING PROTEIN 5 of Arabidopsis thaliana (Mouse-ear cress).